The following is a 220-amino-acid chain: Putative tyrosine-protein phosphatase 1 (220 aa).

Residues 67-218 (FKVPLNAELF…LLARKHVRGQ (152 aa)) enclose the Tyrosine-protein phosphatase domain.

It belongs to the protein-tyrosine phosphatase family. Non-receptor class CDC14 subfamily.

It catalyses the reaction O-phospho-L-tyrosyl-[protein] + H2O = L-tyrosyl-[protein] + phosphate. Could be inactive as the active site cysteine is modified to tryptophan. This chain is Putative tyrosine-protein phosphatase 1 (PTP-1), found in Orgyia pseudotsugata multicapsid polyhedrosis virus (OpMNPV).